We begin with the raw amino-acid sequence, 128 residues long: Iron-sulfur cluster insertion protein ErpA (128 aa).

The iron-sulfur cluster site is built by cysteine 56, cysteine 120, and cysteine 122.

Belongs to the HesB/IscA family. In terms of assembly, homodimer. The cofactor is iron-sulfur cluster.

In terms of biological role, required for insertion of 4Fe-4S clusters for at least IspG. This is Iron-sulfur cluster insertion protein ErpA from Xylella fastidiosa (strain M23).